The sequence spans 389 residues: Large envelope protein (389 aa).

Met1 bears the N-acetylmethionine mark. Residue Gly2 is the site of N-myristoyl glycine; by host attachment. Residues 2–108 (GTNLSVPNPL…PPLRDTHPQA (107 aa)) are pre-S1. The segment at 2-163 (GTNLSVPNPL…LSTTGDPVPN (162 aa)) is pre-S. Topologically, residues 2 to 170 (GTNLSVPNPL…VPNMENIASG (169 aa)) are virion surface; in external conformation. The Intravirion; in internal conformation segment spans residues 2–242 (GTNLSVPNPL…PGYRWMCLRR (241 aa)). Positions 109-163 (MQWNSTTFHQTLQDPRVRALYFPAGGSSSGTVNPVQNTASSISSILSTTGDPVPN) are pre-S2. A helical transmembrane segment spans residues 171–191 (LLGPLLVLQAGFFSLTKILTI). Over 192–242 (PLSLDSWWTSLNFLGETPVCLGQNSQSQISSHSPTCCPPICPGYRWMCLRR) the chain is Intravirion; in external conformation. A helical transmembrane segment spans residues 243–263 (FIIFLCILLLCLIFLLVLLDY). Residues 264–337 (QGMLPVCPLI…WASVRFSWLS (74 aa)) lie on the Virion surface side of the membrane. A glycan (N-linked (GlcNAc...) asparagine; by host) is linked at Asn309. The chain crosses the membrane as a helical span at residues 338-358 (LLVPFVQWFVGLSPTVWLSVI). Residues 359–364 (WMMWFW) are Intravirion-facing. A helical transmembrane segment spans residues 365–387 (GPSLYNILSPFMPLLPIFFCLWV). The Virion surface segment spans residues 388–389 (YI).

The protein belongs to the orthohepadnavirus major surface antigen family. As to quaternary structure, interacts (via its myristoylated pre-S1 region) with the host SLC10A1/NTCP; this interaction is essential for viral entry. In terms of assembly, in its internal form (Li-HBsAg), interacts with the capsid protein and with the isoform S. Interacts with host chaperone CANX. Associates with host chaperone CANX through its pre-S2 N glycan; this association may be essential for isoform M proper secretion. As to quaternary structure, interacts with isoform L. Interacts with the antigens of satellite virus HDV (HDVAgs); this interaction is required for encapsidation of HDV genomic RNA. Isoform M is N-terminally acetylated by host at a ratio of 90%, and N-glycosylated by host at the pre-S2 region. Post-translationally, myristoylated; this modification is essential for its interaction with the host protein SLC10A1/NTCP.

The protein localises to the virion membrane. The large envelope protein exists in two topological conformations, one which is termed 'external' or Le-HBsAg and the other 'internal' or Li-HBsAg. In its external conformation the protein attaches the virus to cell receptors and thereby initiating infection. This interaction determines the species specificity and liver tropism. This attachment induces virion internalization predominantly through caveolin-mediated endocytosis. The large envelope protein also assures fusion between virion membrane and endosomal membrane. In its internal conformation the protein plays a role in virion morphogenesis and mediates the contact with the nucleocapsid like a matrix protein. Its function is as follows. The middle envelope protein plays an important role in the budding of the virion. It is involved in the induction of budding in a nucleocapsid independent way. In this process the majority of envelope proteins bud to form subviral lipoprotein particles of 22 nm of diameter that do not contain a nucleocapsid. The polypeptide is Large envelope protein (Hepatitis B virus genotype B2 (isolate Indonesia/pIDW420/1988) (HBV-B)).